The following is a 283-amino-acid chain: Polyamine aminopropyltransferase (283 aa).

The region spanning 5 to 238 (PTWIDEYHKG…GIWSWTFASD (234 aa)) is the PABS domain. Gln-32 is an S-methyl-5'-thioadenosine binding site. Spermidine is bound by residues His-63 and Asp-87. Residues Glu-107 and 139–140 (DG) each bind S-methyl-5'-thioadenosine. Asp-158 functions as the Proton acceptor in the catalytic mechanism. Position 158–161 (158–161 (DCSD)) interacts with spermidine.

The protein belongs to the spermidine/spermine synthase family. In terms of assembly, homodimer or homotetramer.

Its subcellular location is the cytoplasm. The catalysed reaction is S-adenosyl 3-(methylsulfanyl)propylamine + putrescine = S-methyl-5'-thioadenosine + spermidine + H(+). The protein operates within amine and polyamine biosynthesis; spermidine biosynthesis; spermidine from putrescine: step 1/1. In terms of biological role, catalyzes the irreversible transfer of a propylamine group from the amino donor S-adenosylmethioninamine (decarboxy-AdoMet) to putrescine (1,4-diaminobutane) to yield spermidine. The sequence is that of Polyamine aminopropyltransferase from Prochlorococcus marinus subsp. pastoris (strain CCMP1986 / NIES-2087 / MED4).